We begin with the raw amino-acid sequence, 264 residues long: Phycocyanobilin:ferredoxin oxidoreductase (264 aa).

It belongs to the HY2 family.

It catalyses the reaction (2R,3Z)-phycocyanobilin + 4 oxidized [2Fe-2S]-[ferredoxin] = biliverdin IXalpha + 4 reduced [2Fe-2S]-[ferredoxin] + 4 H(+). Its function is as follows. Catalyzes the four-electron reduction of biliverdin IX-alpha (2-electron reduction at both the A and D rings); the reaction proceeds via an isolatable 2-electron intermediate, 181,182-dihydrobiliverdin. The protein is Phycocyanobilin:ferredoxin oxidoreductase (pcyA) of Prochlorococcus marinus (strain MIT 9313).